The sequence spans 426 residues: Serine--tRNA ligase (426 aa).

An L-serine-binding site is contributed by 229 to 231 (TAE). ATP-binding positions include 260–262 (RTE) and V276. E283 is an L-serine binding site. Residue 350-353 (EVTS) participates in ATP binding. T386 contributes to the L-serine binding site.

The protein belongs to the class-II aminoacyl-tRNA synthetase family. Type-1 seryl-tRNA synthetase subfamily. Homodimer. The tRNA molecule binds across the dimer.

It localises to the cytoplasm. The catalysed reaction is tRNA(Ser) + L-serine + ATP = L-seryl-tRNA(Ser) + AMP + diphosphate + H(+). It carries out the reaction tRNA(Sec) + L-serine + ATP = L-seryl-tRNA(Sec) + AMP + diphosphate + H(+). The protein operates within aminoacyl-tRNA biosynthesis; selenocysteinyl-tRNA(Sec) biosynthesis; L-seryl-tRNA(Sec) from L-serine and tRNA(Sec): step 1/1. Functionally, catalyzes the attachment of serine to tRNA(Ser). Is also able to aminoacylate tRNA(Sec) with serine, to form the misacylated tRNA L-seryl-tRNA(Sec), which will be further converted into selenocysteinyl-tRNA(Sec). The protein is Serine--tRNA ligase of Rhodopirellula baltica (strain DSM 10527 / NCIMB 13988 / SH1).